The chain runs to 130 residues: Glycine cleavage system H protein (130 aa).

Residues 25-106 (TALIGISDFA…PFDSWMIKVK (82 aa)) form the Lipoyl-binding domain. Position 66 is an N6-lipoyllysine (K66).

It belongs to the GcvH family. In terms of assembly, the glycine cleavage system is composed of four proteins: P, T, L and H. (R)-lipoate is required as a cofactor.

Functionally, the glycine cleavage system catalyzes the degradation of glycine. The H protein shuttles the methylamine group of glycine from the P protein to the T protein. This chain is Glycine cleavage system H protein, found in Leptospira borgpetersenii serovar Hardjo-bovis (strain JB197).